Here is a 44-residue protein sequence, read N- to C-terminus: Thymosin beta (44 aa).

The disordered stretch occupies residues 1 to 44 (MSDKHDKPDISEVTKFDKSKLKKTETHEKNPLPTKETIDQEKQG). An N-acetylserine modification is found at S2.

As to expression, expressed in regenerating axons.

The protein resides in the cytoplasm. Its subcellular location is the cytoskeleton. Its function is as follows. Plays an important role in the organization of the cytoskeleton. Binds to and sequesters actin monomers (G actin) and therefore inhibits actin polymerization. May be involved in the regulation of structural plasticity in the CNS. The protein is Thymosin beta of Aplysia californica (California sea hare).